The primary structure comprises 219 residues: Mucosal pentraxin (219 aa).

The signal sequence occupies residues 1–19 (MEKLIVGTLLLTVLSGGIS). The Pentraxin (PTX) domain maps to 24-219 (DGKAFIFPQE…YVVTKPKLWT (196 aa)). The cysteines at positions 55 and 114 are disulfide-linked. Residues Asp77, Asn78, Glu155, Gln156, Asp157, and Gln167 each coordinate Ca(2+).

It belongs to the pentraxin family. As to quaternary structure, homopentamer. Pentraxin (or pentaxin) have a discoid arrangement of 5 non-covalently bound subunits. Ca(2+) serves as cofactor. Expression is restricted to small intestine, stomach and colon. Within colon, expressed in epithelial cells located within the lower to mid region of transverse and distal crypts, but not in proximal colon.

Its subcellular location is the secreted. This is Mucosal pentraxin (Mptx1) from Rattus norvegicus (Rat).